Here is a 169-residue protein sequence, read N- to C-terminus: MPRSQRNDNFIDKTFTIVADILLRIIPTTQREKEAFTYYRDGMSAQSEGEYAEALLNYYEAMRLEIDPYDRSYILYNIGLIHTSNGEHVKALEYYFQALERNPSLPQALNNMAVICHYRGEQAIEQGDSENSEIWFDQAASYWKQAIALAPNNYIEAENWLKITGRLKE.

TPR repeat units lie at residues 35-68, 72-105, and 120-153; these read AFTY…EIDP, SYIL…NPSL, and GEQA…APNN.

The protein belongs to the Ycf3 family.

The protein localises to the plastid. It is found in the chloroplast thylakoid membrane. Its function is as follows. Essential for the assembly of the photosystem I (PSI) complex. May act as a chaperone-like factor to guide the assembly of the PSI subunits. This Staurastrum punctulatum (Green alga) protein is Photosystem I assembly protein Ycf3.